The following is a 208-amino-acid chain: Uracil phosphoribosyltransferase (208 aa).

5-phospho-alpha-D-ribose 1-diphosphate is bound by residues arginine 78, arginine 103, and 130-138 (DPMLATGGT). Uracil contacts are provided by residues isoleucine 193 and 198–200 (GDA). Aspartate 199 provides a ligand contact to 5-phospho-alpha-D-ribose 1-diphosphate.

The protein belongs to the UPRTase family. Mg(2+) serves as cofactor.

The catalysed reaction is UMP + diphosphate = 5-phospho-alpha-D-ribose 1-diphosphate + uracil. The protein operates within pyrimidine metabolism; UMP biosynthesis via salvage pathway; UMP from uracil: step 1/1. With respect to regulation, allosterically activated by GTP. Catalyzes the conversion of uracil and 5-phospho-alpha-D-ribose 1-diphosphate (PRPP) to UMP and diphosphate. This chain is Uracil phosphoribosyltransferase, found in Blochmanniella floridana.